The primary structure comprises 59 residues: Photosystem II reaction center protein K (59 aa).

The propeptide occupies 1–22; sequence MLNIFSLICLNSALYSSSFFFG. The chain crosses the membrane as a helical span at residues 30–50; the sequence is FLSPIVDFMPVIPLFFFLLAF.

In terms of assembly, PSII is composed of 1 copy each of membrane proteins PsbA, PsbB, PsbC, PsbD, PsbE, PsbF, PsbH, PsbI, PsbJ, PsbK, PsbL, PsbM, PsbT, PsbX, PsbY, PsbZ, Psb30/Ycf12, at least 3 peripheral proteins of the oxygen-evolving complex and a large number of cofactors. It forms dimeric complexes. This protein, PsbL and plastoquinone-9 are found in PSII dimers but not seen in PSII monomers.

It is found in the plastid. Its subcellular location is the chloroplast thylakoid membrane. One of the components of the core complex of photosystem II (PSII). PSII is a light-driven water:plastoquinone oxidoreductase that uses light energy to abstract electrons from H(2)O, generating O(2) and a proton gradient subsequently used for ATP formation. It consists of a core antenna complex that captures photons, and an electron transfer chain that converts photonic excitation into a charge separation. May be involved in PSII dimerization. Its function is as follows. One of the components of the core complex of photosystem II (PSII). PSII is a light-driven water:plastoquinone oxidoreductase that uses light energy to abstract electrons from H(2)O, generating O(2) and a proton gradient subsequently used for ATP formation. It consists of a core antenna complex that captures photons, and an electron transfer chain that converts photonic excitation into a charge separation. The chain is Photosystem II reaction center protein K from Spinacia oleracea (Spinach).